Consider the following 1058-residue polypeptide: Carbamoyl phosphate synthase large chain (1058 aa).

Residues 1–401 (MPKRTDIQKI…SLLKACRSLE (401 aa)) are carboxyphosphate synthetic domain. Residues arginine 129, arginine 169, glycine 175, glycine 176, arginine 208, isoleucine 210, glutamate 215, glycine 241, isoleucine 242, histidine 243, glutamine 284, and glutamate 298 each contribute to the ATP site. The ATP-grasp 1 domain maps to 133–327 (KQLMEELEQP…IAKLAAKIAV (195 aa)). Mg(2+) contacts are provided by glutamine 284, glutamate 298, and asparagine 300. Mn(2+) contacts are provided by glutamine 284, glutamate 298, and asparagine 300. An oligomerization domain region spans residues 402 to 546 (IGVHHNEIPE…YSTYGWENES (145 aa)). The tract at residues 547–929 (IRSDKESVLV…ALYKAFEASY (383 aa)) is carbamoyl phosphate synthetic domain. Positions 671–861 (EQALKELDIP…MAQVATKLIL (191 aa)) constitute an ATP-grasp 2 domain. Residues arginine 707, serine 746, isoleucine 748, glutamate 752, glycine 777, valine 778, histidine 779, serine 780, glutamine 820, and glutamate 832 each coordinate ATP. Positions 820, 832, and 834 each coordinate Mg(2+). Mn(2+) is bound by residues glutamine 820, glutamate 832, and asparagine 834. An MGS-like domain is found at 930–1058 (LHLPTFGNVV…ESRSFVTEAI (129 aa)). An allosteric domain region spans residues 930–1058 (LHLPTFGNVV…ESRSFVTEAI (129 aa)).

Belongs to the CarB family. In terms of assembly, composed of two chains; the small (or glutamine) chain promotes the hydrolysis of glutamine to ammonia, which is used by the large (or ammonia) chain to synthesize carbamoyl phosphate. Tetramer of heterodimers (alpha,beta)4. The cofactor is Mg(2+). Requires Mn(2+) as cofactor.

The catalysed reaction is hydrogencarbonate + L-glutamine + 2 ATP + H2O = carbamoyl phosphate + L-glutamate + 2 ADP + phosphate + 2 H(+). The enzyme catalyses hydrogencarbonate + NH4(+) + 2 ATP = carbamoyl phosphate + 2 ADP + phosphate + 2 H(+). It functions in the pathway amino-acid biosynthesis; L-arginine biosynthesis; carbamoyl phosphate from bicarbonate: step 1/1. Its pathway is pyrimidine metabolism; UMP biosynthesis via de novo pathway; (S)-dihydroorotate from bicarbonate: step 1/3. Its function is as follows. Large subunit of the glutamine-dependent carbamoyl phosphate synthetase (CPSase). CPSase catalyzes the formation of carbamoyl phosphate from the ammonia moiety of glutamine, carbonate, and phosphate donated by ATP, constituting the first step of 2 biosynthetic pathways, one leading to arginine and/or urea and the other to pyrimidine nucleotides. The large subunit (synthetase) binds the substrates ammonia (free or transferred from glutamine from the small subunit), hydrogencarbonate and ATP and carries out an ATP-coupled ligase reaction, activating hydrogencarbonate by forming carboxy phosphate which reacts with ammonia to form carbamoyl phosphate. The sequence is that of Carbamoyl phosphate synthase large chain from Streptococcus pneumoniae (strain 70585).